The chain runs to 85 residues: High affinity immunoglobulin epsilon receptor subunit gamma (85 aa).

Residues 1-18 form the signal peptide; that stretch reads MIPAVVLLLLLLVEQAAA. Topologically, residues 19-23 are extracellular; sequence LGEPQ. The helical transmembrane segment at 24-44 threads the bilayer; the sequence is LCYILDAILFLYGIVLTLLYC. Over 45 to 85 the chain is Cytoplasmic; it reads RLKLQVRKAATASEKSDGIYTGLSTRTQETYETLKHEKPPQ. The ITAM domain maps to 53–81; that stretch reads AATASEKSDGIYTGLSTRTQETYETLKHE. Residue Tyr64 is modified to Phosphotyrosine. Position 68 is a phosphoserine (Ser68). A Phosphotyrosine modification is found at Tyr75. Thr77 carries the phosphothreonine modification.

This sequence belongs to the CD3Z/FCER1G family. IgE Fc receptor is a tetramer of an alpha chain, a beta chain, and two disulfide linked gamma chains. Associates with FCGR1A; forms a functional signaling complex. The signaling subunit of immunoglobulin gamma (IgG) Fc receptor complex. As a homodimer or a heterodimer of CD247 and FCER1G, associates with the ligand binding subunit FCGR3A to form a functional receptor complex. Associates with CLEC6A. Interacts with CLEC4E. Interacts (via ITAM domain) with SYK (via SH2 domains); activates SYK, enabling integrin-mediated activation of neutrophils and macrophages. Interacts with CSF2RB and recruits SYK in response to IL3 stimulation; this interaction is direct. Interacts with CD300LH; the interaction may be indirect. Interacts with CD300LD. Interacts with TARM1.

The protein resides in the cell membrane. Functionally, adapter protein containing an immunoreceptor tyrosine-based activation motif (ITAM) that transduces activation signals from various immunoreceptors. As a component of the high-affinity immunoglobulin E (IgE) receptor, mediates allergic inflammatory signaling in mast cells. As a constitutive component of interleukin-3 receptor complex, selectively mediates interleukin 4/IL4 production by basophils priming T-cells toward effector T-helper 2 subset. Associates with pattern recognition receptors CLEC4D and CLEC4E to form a functional signaling complex in myeloid cells. Binding of mycobacterial trehalose 6,6'-dimycolate (TDM) to this receptor complex leads to phosphorylation of ITAM, triggering activation of SYK, CARD9 and NF-kappa-B, consequently driving maturation of antigen-presenting cells and shaping antigen-specific priming of T-cells toward effector T-helper 1 and T-helper 17 cell subtypes. May function cooperatively with other activating receptors. Functionally linked to integrin beta-2/ITGB2-mediated neutrophil activation. Also involved in integrin alpha-2/ITGA2-mediated platelet activation. This is High affinity immunoglobulin epsilon receptor subunit gamma (FCER1G) from Bos taurus (Bovine).